Reading from the N-terminus, the 318-residue chain is Probable RNA methyltransferase At5g51130 (318 aa).

Disordered stretches follow at residues 1 to 61 (MGRD…NQEV) and 146 to 184 (NSTKPSEKKSSSEGADGVHGSKEPSVSLSNGEAKADSAE). The segment covering 16 to 34 (RSNENEKSVEKVVANEEKV) has biased composition (basic and acidic residues). Positions 37–52 (QQKQKQQQGQQGNCNQ) are enriched in low complexity. Residues 82 to 318 (DPRLKVLKKE…FDRQILAFQK (237 aa)) form the Bin3-type SAM domain.

This sequence belongs to the methyltransferase superfamily.

Probable RNA methyltransferase. This is Probable RNA methyltransferase At5g51130 from Arabidopsis thaliana (Mouse-ear cress).